We begin with the raw amino-acid sequence, 4644 residues long: MSEPGGGEDGSAGLEVSAVQNVADVAVLQKHLRKLVPLLLEDGGDAPAALEAALEEKSALEQMRKFLSDPQVHTVLVERSTLKEDVGDEGEEEKEFISYNINIDIHYGVKSNSLAFIKRAPVIDADKPVSSQLRVLTLSEDSPYETLHSFISNAVAPFFKSYIRESGKADRDGDKMAPSVEKKIAELEMGLLHLQQNIEIPEISLPIHPIITNVAKQCYERGEKPKVTDFGDKVEDPTFLNQLQSGVNRWIREIQKVTKLDRDPASGTALQEISFWLNLERALYRIQEKRESPEVLLTLDILKHGKRFHATVSFDTDTGLKQALETVNDYNPLMKDFPLNDLLSATELDKIRQALVAIFTHLRKIRNTKYPIQRALRLVEAISRDLSSQLLKVLGTRKLMHVAYEEFEKVMVACFEVFQTWDDEYEKLQVLLRDIVKRKREENLKMVWRINPAHRKLQARLDQMRKFRRQHEQLRAVIVRVLRPQVTAVAQQNQGEAPEPQDMKVAEVLFDAADANAIEEVNLAYENVKEVDGLDVSKEGTEAWEAAMKRYDERIDRVETRITARLRDQLGTAKNANEMFRIFSRFNALFVRPHIRGAIREYQTQLIQRVKDDIESLHDKFKVQYPQSQACKMSHVRDLPPVSGSIIWAKQIDRQLTAYMKRVEDVLGKGWENHVEGQKLKQDGDSFRMKLNTQEIFDDWARKVQQRNLGVSGRIFTIESARVRGRTGNVLKLKVNFLPEIITLSKEVRNLKWLGFRVPLAIVNKAHQANQLYPFAISLIESVRTYERTCEKVEERNTISLLVAGLKKEVQALIAEGIALVWESYKLDPYVQRLAETVFNFQEKVDDLLIIEEKIDLEVRSLETCMYDHKTFSEILNRVQKAVDDLNLHSYSNLPIWVNKLDMEIERILGVRLQAGLRAWTQVLLGQAEDKAEVDMDTDAPQVSHKPGGEPKIKNVVHELRITNQVIYLNPPIEECRYKLYQEMFAWKMVVLSLPRIQSQRYQVGVHYELTEEEKFYRNALTRMPDGPVALEESYSAVMGIVTEVEQYVKVWLQYQCLWDMQAENIYNRLGEDLNKWQALLVQIRKARGTFDNAETKKEFGPVVIDYGKVQSKVNLKYDSWHKEVLSKFGQMLGSNMTEFHSQISKSRQELEQHSVDTASTSDAVTFITYVQSLKRKIKQFEKQVELYRNGQRLLEKQRFQFPPSWLYIDNIEGEWGAFNDIMRRKDSAIQQQVANLQMKIVQEDRAVESRTTDLLTDWEKTKPVTGNLRPEEALQALTIYEGKFGRLKDDREKCAKAKEALELTDTGLLSGSEERVQVALEELQDLKGVWSELSKVWEQIDQMKEQPWVSVQPRKLRQNLDGLLNQLKNFPARLRQYASYEFVQRLLKGYMKINMLVIELKSEALKDRHWKQLMKRLHVNWVVSELTLGQIWDVDLQKNEAVVKDVLLVAQGEMALEEFLKQIREVWNTYELDLVNYQNKCRLIRGWDDLFNKVKEHINSVSAMKLSPYYKVFEEDALSWEDKLNRIMALFDVWIDVQRRWVYLEGIFTGSADIKHLLPVETQRFQSISTEFLALMKKVSKSPLVMDVLNIQGVQRSLERLADLLGKIQKALGEYLERERSSFPRFYFVGDEDLLEIIGNSKNVAKLQKHFKKMFAGVSSIILNEDNSVVLGISSREGEEVMFKTPVSITEHPKINEWLTLVEKEMRVTLAKLLAESVTEVEIFGKATSIDPNTYITWIDKYQAQLVVLSAQIAWSENVENALSNVGGGGDVGPLQSVLSNVEVTLNVLADSVLMEQPPLRRRKLEHLITELVHQRDVTRSLIKSKIDNAKSFEWLSQMRFYFDPKQTDVLQQLSIQMANAKFNYGFEYLGVQDKLVQTPLTDRCYLTMTQALEARLGGSPFGPAGTGKTESVKALGHQLGRFVLVFNCDETFDFQAMGRIFVGLCQVGAWGCFDEFNRLEERMLSAVSQQVQCIQEALREHSNPNYDKTSAPITCELLNKQVKVSPDMAIFITMNPGYAGRSNLPDNLKKLFRSLAMTKPDRQLIAQVMLYSQGFRTAEVLANKIVPFFKLCDEQLSSQSHYDFGLRALKSVLVSAGNVKRERIQKIKREKEERGEAVDEGEIAENLPEQEILIQSVCETMVPKLVAEDIPLLFSLLSDVFPGVQYHRGEMTALREELKKVCQEMYLTYGDGEEVGGMWVEKVLQLYQITQINHGLMMVGPSGSGKSMAWRVLLKALERLEGVEGVAHIIDPKAISKDHLYGTLDPNTREWTDGLFTHVLRKIIDNVRGELQKRQWIVFDGDVDPEWVENLNSVLDDNKLLTLPNGERLSLPPNVRIMFEVQDLKYATLATVSRCGMVWFSEDVLSTDMIFNNFLARLRSIPLDEGEDEAQRRRKGKEDEGEEAASPMLQIQRDAATIMQPYFTSNGLVTKALEHAFKLEHIMDLTRLRCLGSLFSMLHQACRNVAQYNANHPDFPMQIEQLERYIQRYLVYAILWSLSGDSRLKMRAELGEYIRRITTVPLPTAPNVPIIDYEVSISGEWSPWQAKVPQIEVETHKVAAPDVVVPTLDTVRHEALLYTWLAEHKPLVLCGPPGSGKTMTLFSALRALPDMEVVGLNFSSATTPELLLKTFDHYCEYRRTPNGVVLAPVQLGKWLVLFCDEINLPDMDKYGTQRVISFIRQMVEHGGFYRTSDQTWVKLERIQFVGACNPPTDPGRKPLSHRFLRHVPVVYVDYPGPASLTQIYGTFNRAMLRLIPSLRTYAEPLTAAMVEFYTMSQERFTQDTQPHYIYSPREMTRWVRGIFEALRPLETLPVEGLIRIWAHEALRLFQDRLVEDEERRWTDENIDMVALKHFPNIDKEKAMSRPILYSNWLSKDYIPVDQEELRDYVKARLKVFYEEELDVPLVLFNEVLDHVLRIDRIFRQPQGHLLLIGVSGAGKTTLSRFVAWMNGLSVYQIKVHRKYTGEDFDEDLRTVLRRSGCKNEKIAFIMDESNVLDSGFLERMNTLLANGEVPGLFEGDEYATLMTQCKEGAQKEGLMLDSHEELYKWFTSQVIRNLHVVFTMNPSSEGLKDRAATSPALFNRCVLNWFGDWSTEALYQVGKEFTSKMDLEKPNYIVPDYMPVVYDKLPQPPTHREAIVNSCVFVHQTLHQANARLAKRGGRTMAITPRHYLDFINHYANLFHEKRSELEEQQMHLNVGLRKIKETVDQVEELRRDLRIKSQELEVKNAAANDKLKKMVKDQQEAEKKKVMSQEIQEQLHKQQEVIADKQMSVKEDLDKVEPAVIEAQNAVKSIKKQHLVEVRSMANPPAAVKLALESICLLLGESTTDWKQIRSIIMRENFIPTIVNFSAEEISDAIREKMKKNYMSNPSYNYEIVNRASLACGPMVKWAIAQLNYADMLKRVEPLRNELQKLEDDAKDNQQKANEVEQMIRDLEASIARYKEEYAVLISEAQAIKADLAAVEAKVNRSTALLKSLSAERERWEKTSETFKNQMSTIAGDCLLSAAFIAYAGYFDQQMRQNLFTTWSHHLQQANIQFRTDIARTEYLSNADERLRWQASSLPADDLCTENAIMLKRFNRYPLIIDPSGQATEFIMNEYKDRKITRTSFLDDAFRKNLESALRFGNPLLVQDVESYDPVLNPVLNREVRRTGGRVLITLGDQDIDLSPSFVIFLSTRDPTVEFPPDLCSRVTFVNFTVTRSSLQSQCLNEVLKAERPDVDEKRSDLLKLQGEFQLRLRQLEKSLLQALNEVKGRILDDDTIITTLENLKREAAEVTRKVEETDIVMQEVETVSQQYLPLSTACSSIYFTMESLKQVHFLYQYSLQFFLDIYHNVLYENPNLKGATDHTQRLSIITKDLFQVAFNRVARGMLHQDHITFAMLLARIKLKGTVGEPTYDAEFQHFLRGKEIVLSAGSTPKIQGLTVEQAEAVVRLSCLPAFKDLIAKVQADEQFGIWLDSSSPEQTVPYLWSEETPTTPIGQAIHRLLLIQAFRPDRLLAMAHMFVSTNLGESFMSIMEQPLDLTHIVGTEVKPNTPVLMCSVPGYDASGHVEDLAAEQNTQITSIAIGSAEGFNQADKAINTAVKSGRWVMLKNVHLAPGWLMQLEKKLHSLQPHACFRLFLTMEINPKVPVNLLRAGRIFVFEPPPGVKANMLRTFSSIPVSRICKSPNERARLYFLLAWFHAIIQERLRYAPLGWSKKYEFGESDLRSACDTVDTWLDDTAKGRQNISPDKIPWSALKTLMAQSIYGGRVDNEFDQRLLNTFLERLFTTRSFDSEFKLACKVDGHKDIQMPDGIRREEFVQWVELLPDAQTPSWLGLPNNAERVLLTTQGVDMISKMLKMQMLEDEDDLAYAETEKKARTDSTSDGRPAWMRTLHTTASNWLHLIPQTLSPLKRTVENIKDPLFRFFEREVKMGAKLLQDVRQDLADVVQVCEGKKKQTNYLRTLINELVKGILPRSWSHYTVPAGMTVIQWVSDFSERIKQLQNISQAAASGGAKELKNIHVCLGGLFVPEAYITATRQYVAQANSWSLEELCLEVNVTASQSATLDACSFGVTGLKLQGATCSNNKLSLSNAISTVLPLTQLRWVKQTSAEKKASVVTLPVYLNFTRADLIFTVDFEIATKEDPRSFYERGVAVLCTE.

Residue Ser2 is modified to N-acetylserine. Residues 2–1865 (SEPGGGEDGS…SIQMANAKFN (1864 aa)) form a stem region. 4 coiled-coil regions span residues 48–69 (AALE…FLSD), 179–200 (SVEK…NIEI), 453–476 (AHRK…QLRA), and 541–564 (TEAW…RITA). Phosphoserine is present on Ser68. The interaction with DYNC1I2 stretch occupies residues 446–701 (MVWRINPAHR…NTQEIFDDWA (256 aa)). The interaction with DYNC1LI2 stretch occupies residues 649–800 (AKQIDRQLTA…EKVEERNTIS (152 aa)). An N6-acetyllysine modification is found at Lys1123. The stretch at 1169–1201 (TYVQSLKRKIKQFEKQVELYRNGQRLLEKQRFQ) forms a coiled coil. Position 1228 is a phosphoserine (Ser1228). 2 coiled-coil regions span residues 1229–1250 (AIQQ…AVES) and 1355–1371 (RKLR…LKNF). 4 AAA regions span residues 1866-2097 (YGFE…VLVS), 2178-2450 (EELK…LTRL), 2554-2803 (EVET…WVRG), and 2897-3166 (VFYE…GGRT). ATP is bound by residues 1904-1911 (GPAGTGKT) and 2222-2229 (GPSGSGKS). The interval 2388–2408 (GEDEAQRRRKGKEDEGEEAAS) is disordered. Residues 2593–2600 (GPPGSGKT) and 2935–2942 (GVSGAGKT) contribute to the ATP site. 3 coiled-coil regions span residues 3187–3273 (EKRS…ADKQ), 3394–3498 (AIAQ…KNQM), and 3735–3798 (EFQL…VSQQ). The tract at residues 3187–3498 (EKRSELEEQQ…KTSETFKNQM (312 aa)) is stalk. Lys3478 bears the N6-acetyllysine mark. AAA regions lie at residues 3551 to 3780 (LSNA…EVTR) and 4003 to 4219 (AHMF…TVDT). Ser4160 is subject to Phosphoserine. Lys4281 carries the post-translational modification N6-acetyllysine. Phosphothreonine is present on Thr4364. At Ser4366 the chain carries Phosphoserine.

Belongs to the dynein heavy chain family. Homodimer. The cytoplasmic dynein 1 complex consists of two catalytic heavy chains (HCs) and a number of non-catalytic subunits presented by intermediate chains (ICs), light intermediate chains (LICs) and light chains (LCs); the composition seems to vary in respect to the IC, LIC and LC composition. The heavy chain homodimer serves as a scaffold for the probable homodimeric assembly of the respective non-catalytic subunits. The ICs and LICs bind directly to the HC dimer and dynein LCs assemble on the IC dimer. Interacts with DYNC1LI1; DYNC1LI1 and DYNC1LI2 bind mutually exclusive to DYNC1H1. Interacts with DYNC1LI2; DYNC1LI1 and DYNC1LI2 bind mutually exclusive to DYNC1H1. Interacts with DYNC1I2. Interacts with BICD2. Interacts with DNALI1.

It is found in the cytoplasm. Its subcellular location is the cytoskeleton. Cytoplasmic dynein 1 acts as a motor for the intracellular retrograde motility of vesicles and organelles along microtubules. Dynein has ATPase activity; the force-producing power stroke is thought to occur on release of ADP. Plays a role in mitotic spindle assembly and metaphase plate congression. The protein is Cytoplasmic dynein 1 heavy chain 1 (Dync1h1) of Mus musculus (Mouse).